Reading from the N-terminus, the 163-residue chain is 2-C-methyl-D-erythritol 2,4-cyclodiphosphate synthase (163 aa).

Aspartate 12 and histidine 14 together coordinate a divalent metal cation. Residues 12–14 (DVH) and 38–39 (HS) contribute to the 4-CDP-2-C-methyl-D-erythritol 2-phosphate site. Histidine 46 is a binding site for a divalent metal cation. 4-CDP-2-C-methyl-D-erythritol 2-phosphate-binding positions include 60–62 (DIG), 136–139 (TTSE), phenylalanine 143, and arginine 146.

The protein belongs to the IspF family. As to quaternary structure, homotrimer. A divalent metal cation is required as a cofactor.

It catalyses the reaction 4-CDP-2-C-methyl-D-erythritol 2-phosphate = 2-C-methyl-D-erythritol 2,4-cyclic diphosphate + CMP. It functions in the pathway isoprenoid biosynthesis; isopentenyl diphosphate biosynthesis via DXP pathway; isopentenyl diphosphate from 1-deoxy-D-xylulose 5-phosphate: step 4/6. Involved in the biosynthesis of isopentenyl diphosphate (IPP) and dimethylallyl diphosphate (DMAPP), two major building blocks of isoprenoid compounds. Catalyzes the conversion of 4-diphosphocytidyl-2-C-methyl-D-erythritol 2-phosphate (CDP-ME2P) to 2-C-methyl-D-erythritol 2,4-cyclodiphosphate (ME-CPP) with a corresponding release of cytidine 5-monophosphate (CMP). The sequence is that of 2-C-methyl-D-erythritol 2,4-cyclodiphosphate synthase from Xanthomonas campestris pv. campestris (strain 8004).